The chain runs to 380 residues: Chaperone protein DnaJ (380 aa).

The J domain occupies 5–70 (DFYEVLGVSK…NLRARYDQYG (66 aa)). Residues 135-213 (GVSKEIKVPS…CHGEGRYQKT (79 aa)) form a CR-type zinc finger. Positions 148, 151, 165, 168, 187, 190, 201, and 204 each coordinate Zn(2+). 4 CXXCXGXG motif repeats span residues 148-155 (CEVCNGSG), 165-172 (CPTCHGAG), 187-194 (CPHCHGRG), and 201-208 (CRKCHGEG).

It belongs to the DnaJ family. In terms of assembly, homodimer. The cofactor is Zn(2+).

It is found in the cytoplasm. Its function is as follows. Participates actively in the response to hyperosmotic and heat shock by preventing the aggregation of stress-denatured proteins and by disaggregating proteins, also in an autonomous, DnaK-independent fashion. Unfolded proteins bind initially to DnaJ; upon interaction with the DnaJ-bound protein, DnaK hydrolyzes its bound ATP, resulting in the formation of a stable complex. GrpE releases ADP from DnaK; ATP binding to DnaK triggers the release of the substrate protein, thus completing the reaction cycle. Several rounds of ATP-dependent interactions between DnaJ, DnaK and GrpE are required for fully efficient folding. Also involved, together with DnaK and GrpE, in the DNA replication of plasmids through activation of initiation proteins. In Aeromonas salmonicida (strain A449), this protein is Chaperone protein DnaJ.